The chain runs to 183 residues: Putative 3-methyladenine DNA glycosylase (183 aa).

The protein belongs to the DNA glycosylase MPG family.

The sequence is that of Putative 3-methyladenine DNA glycosylase from Legionella pneumophila (strain Corby).